The primary structure comprises 594 residues: (-)-endo-fenchol synthase, chloroplastic (594 aa).

A chloroplast-targeting transit peptide spans 1–50 (MSSLVMHVGIVNKPAITYLPTLSRRASNLHNVSSTRLQTSCSLQLDYKPV). The Mg(2+) site is built by D348, D352, D492, and E500. Residues 348 to 352 (DDIYD) carry the DDXXD motif motif.

It belongs to the terpene synthase family. Tpsa subfamily. Mg(2+) serves as cofactor. Mn(2+) is required as a cofactor. As to expression, expressed at low levels in leaves.

The protein resides in the plastid. It is found in the chloroplast. The catalysed reaction is (2E)-geranyl diphosphate = alpha-pinene + diphosphate. It catalyses the reaction (2E)-geranyl diphosphate + H2O = (1S,2S,4R)-endo-fenchol + diphosphate. The enzyme catalyses (2E)-geranyl diphosphate = limonene + diphosphate. Its pathway is secondary metabolite biosynthesis; terpenoid biosynthesis. Monoterpene synthase involved in the biosynthesis of volatile compounds widely used in aromatherapy and folk medicine, and present in culinary herbs. Mediates the conversion of (2E)-geranyl diphosphate (GPP) into alpha fenchol, limonene and alpha-pinene and, as minor compounds, into beta-myrcene, alpha-terpinolene and alpha-phellandrene. This chain is (-)-endo-fenchol synthase, chloroplastic, found in Lavandula stoechas (Butterfly lavender).